A 189-amino-acid chain; its full sequence is Streptothricin acetyltransferase (189 aa).

Residues 44 to 189 enclose the N-acetyltransferase domain; that stretch reads FALREVPADP…HALYMSMPCP (146 aa). A disordered region spans residues 55 to 76; sequence LVKVFPDDGGSDGEDGAEGEDA. Residues 63–75 are compositionally biased toward acidic residues; sequence GGSDGEDGAEGED.

It belongs to the acetyltransferase family. GNAT subfamily.

It carries out the reaction streptothricin F + acetyl-CoA = N(beta)-acetylstreptothricin F + CoA + H(+). Functionally, involved in resistance to streptothricin, a broad-spectrum antibiotic produced by streptomycetes. Detoxifies streptothricin via acetylation of the beta amino group of the first beta-lysyl moiety of streptothricin. The sequence is that of Streptothricin acetyltransferase from Streptomyces lavendulae.